Consider the following 1220-residue polypeptide: Formin-F (1220 aa).

Positions 1–10 (MNRIFGRKKK) are enriched in basic residues. The segment at 1–62 (MNRIFGRKKK…TNSKSADKFD (62 aa)) is disordered. The 368-residue stretch at 6–373 (GRKKKDKDSD…QISVNKPMIG (368 aa)) folds into the GBD/FH3 domain. The segment covering 11 to 20 (DKDSDEKGST) has biased composition (basic and acidic residues). Positions 41–56 (AYSSLQPDGNNSTNSK) are enriched in polar residues. The stretch at 392 to 428 (VALQSEFQKNIEELAKVKDQLKKANFDLNIANQELSS) forms a coiled coil. Disordered stretches follow at residues 461 to 659 (IDSN…KFTV), 711 to 732 (SQKK…GTVS), and 1049 to 1192 (DEAK…KKDI). Composition is skewed to low complexity over residues 501–518 (SKPP…SSSQ) and 525–554 (SNLS…PQQQ). The 124-residue stretch at 532 to 655 (SDSLSNDFKS…NSNKPPANAP (124 aa)) folds into the FH1 domain. Residues 555-564 (NIESTLTPEP) show a composition bias toward polar residues. Residues 575–638 (TTPPPAPPAP…GKGGPPPPPG (64 aa)) show a composition bias toward pro residues. The FH2 domain occupies 656–1054 (KFTVSKPTTK…AIKRDEAKAK (399 aa)). The segment covering 711–722 (SQKKLEASDKKS) has biased composition (basic and acidic residues). The stretch at 1032–1062 (YKDFQRDKEAAERAIKRDEAKAKKAQQLKRM) forms a coiled coil. Residues 1066–1083 (IASSTNNKNPLASSSTSV) are compositionally biased toward polar residues. Residues 1083–1158 (VGDGGMVEDI…TPSKSGSRRE (76 aa)) form the DAD domain. A compositionally biased stretch (low complexity) spans 1117 to 1142 (DSSSITTISEQSENSNTSSITITTPS). Residues 1161–1192 (TSKSSDKDKEKEKEKEKQCESTESEDINKKDI) show a composition bias toward basic and acidic residues.

It belongs to the formin homology family. Diaphanous subfamily. Interacts (via GBD/FH3 domain) with activated Rho-GTPases.

In terms of biological role, formins play an important role in the nucleation of actin and the formation of linear actin filaments. In Dictyostelium discoideum (Social amoeba), this protein is Formin-F (forF).